Here is a 202-residue protein sequence, read N- to C-terminus: ATP-dependent Clp protease proteolytic subunit (202 aa).

The Nucleophile role is filled by Ser-106. Residue His-131 is part of the active site.

Belongs to the peptidase S14 family. In terms of assembly, fourteen ClpP subunits assemble into 2 heptameric rings which stack back to back to give a disk-like structure with a central cavity, resembling the structure of eukaryotic proteasomes.

The protein localises to the cytoplasm. The enzyme catalyses Hydrolysis of proteins to small peptides in the presence of ATP and magnesium. alpha-casein is the usual test substrate. In the absence of ATP, only oligopeptides shorter than five residues are hydrolyzed (such as succinyl-Leu-Tyr-|-NHMec, and Leu-Tyr-Leu-|-Tyr-Trp, in which cleavage of the -Tyr-|-Leu- and -Tyr-|-Trp bonds also occurs).. Its function is as follows. Cleaves peptides in various proteins in a process that requires ATP hydrolysis. Has a chymotrypsin-like activity. Plays a major role in the degradation of misfolded proteins. This chain is ATP-dependent Clp protease proteolytic subunit, found in Verminephrobacter eiseniae (strain EF01-2).